A 450-amino-acid chain; its full sequence is Oxygen-independent coproporphyrinogen III oxidase (450 aa).

The 238-residue stretch at 45–282 (IPAGGSISLY…RTLILWDGYQ (238 aa)) folds into the Radical SAM core domain. Y54 is a binding site for S-adenosyl-L-methionine. 2 residues coordinate [4Fe-4S] cluster: C60 and C64. An S-adenosyl-L-methionine-binding site is contributed by F66. [4Fe-4S] cluster is bound at residue C67. S-adenosyl-L-methionine-binding positions include G111, 112–113 (GT), E144, Q171, R183, D208, A242, and I328.

It belongs to the anaerobic coproporphyrinogen-III oxidase family. As to quaternary structure, monomer. [4Fe-4S] cluster serves as cofactor.

It is found in the cytoplasm. The enzyme catalyses coproporphyrinogen III + 2 S-adenosyl-L-methionine = protoporphyrinogen IX + 2 5'-deoxyadenosine + 2 L-methionine + 2 CO2. It functions in the pathway porphyrin-containing compound metabolism; protoporphyrin-IX biosynthesis; protoporphyrinogen-IX from coproporphyrinogen-III (AdoMet route): step 1/1. Its function is as follows. Involved in the heme and chlorophyll biosynthesis. Catalyzes the anaerobic oxidative decarboxylation of propionate groups of rings A and B of coproporphyrinogen III to yield the vinyl groups in protoporphyrinogen IX. The protein is Oxygen-independent coproporphyrinogen III oxidase (hemZ) of Cereibacter sphaeroides (strain ATCC 17023 / DSM 158 / JCM 6121 / CCUG 31486 / LMG 2827 / NBRC 12203 / NCIMB 8253 / ATH 2.4.1.) (Rhodobacter sphaeroides).